The chain runs to 367 residues: Chorismate synthase (367 aa).

Position 48 (R48) interacts with NADP(+). Residues 125-127, 243-244, G283, 298-302, and R324 each bind FMN; these read RSS, NA, and KPTSS.

The protein belongs to the chorismate synthase family. In terms of assembly, homotetramer. It depends on FMNH2 as a cofactor.

The enzyme catalyses 5-O-(1-carboxyvinyl)-3-phosphoshikimate = chorismate + phosphate. The protein operates within metabolic intermediate biosynthesis; chorismate biosynthesis; chorismate from D-erythrose 4-phosphate and phosphoenolpyruvate: step 7/7. Catalyzes the anti-1,4-elimination of the C-3 phosphate and the C-6 proR hydrogen from 5-enolpyruvylshikimate-3-phosphate (EPSP) to yield chorismate, which is the branch point compound that serves as the starting substrate for the three terminal pathways of aromatic amino acid biosynthesis. This reaction introduces a second double bond into the aromatic ring system. This is Chorismate synthase from Psychrobacter cryohalolentis (strain ATCC BAA-1226 / DSM 17306 / VKM B-2378 / K5).